The chain runs to 360 residues: Cannabinoid receptor 2 (360 aa).

At 1-33 (MEECWVTEIANGSKDGLDSNPMKDYMILSGPQK) the chain is on the extracellular side. An N-linked (GlcNAc...) asparagine glycan is attached at N11. The chain crosses the membrane as a helical span at residues 34-59 (TAVAVLCTLLGLLSALENVAVLYLIL). Residues 60–71 (SSHQLRRKPSYL) lie on the Cytoplasmic side of the membrane. Residues 72–92 (FIGSLAGADFLASVVFACSFV) form a helical membrane-spanning segment. The Extracellular portion of the chain corresponds to 93–104 (NFHVFHGVDSKA). A helical membrane pass occupies residues 105–129 (VFLLKIGSVTMTFTASVGSLLLTAI). Topologically, residues 130–149 (DRYLCLRYPPSYKALLTRGR) are cytoplasmic. Residues 150–172 (ALVTLGIMWVLSALVSYLPLMGW) form a helical membrane-spanning segment. Residues 173–188 (TCCPRPCSELFPLIPN) are Extracellular-facing. Residues 189–214 (DYLLSWLLFIAFLFSGIIYTYGHVLW) form a helical membrane-spanning segment. The Cytoplasmic segment spans residues 215-246 (KAHQHVASLSGHQDRQVPGMARMRLDVRLAKT). The chain crosses the membrane as a helical span at residues 247 to 267 (LGLVLAVLLICWFPVLALMAH). Topologically, residues 268-279 (SLATTLSDQVKK) are extracellular. Residues 280–301 (AFAFCSMLCLINSMVNPVIYAL) form a helical membrane-spanning segment. Topologically, residues 302–360 (RSGEIRSSAHHCLAHWKKCVRGLGSEAKEEAPRSSVTETEADGKITPWPDSRDLDLSDC) are cytoplasmic. Residues 327–360 (EAKEEAPRSSVTETEADGKITPWPDSRDLDLSDC) are disordered. Phosphoserine is present on residues S335 and S336. The residue at position 338 (T338) is a Phosphothreonine. The segment covering 351–360 (DSRDLDLSDC) has biased composition (basic and acidic residues). S352 is modified (phosphoserine).

Belongs to the G-protein coupled receptor 1 family. In terms of processing, constitutively phosphorylated on Ser-352; phosphorylation increases cell internalization and desensitizes the receptor. As to expression, preferentially expressed in cells of the immune system with higher expression in B-cells and NK cells (at protein level). Expressed in skin in suprabasal layers and hair follicles (at protein level). Highly expressed in tonsil and to a lower extent in spleen, peripheral blood mononuclear cells, and thymus. PubMed:14657172 could not detect expression in normal brain. Expressed in brain by perivascular microglial cells and dorsal root ganglion sensory neurons (at protein level). Two isoforms are produced by alternative promoter usage and differ only in the 5' UTR: isoform CB2A is observed predominantly in testis with some expression in brain, while isoform CB2B is predominant in spleen and leukocytes.

Its subcellular location is the cell membrane. It is found in the cell projection. The protein resides in the dendrite. The protein localises to the perikaryon. Functionally, heterotrimeric G protein-coupled receptor for endocannabinoid 2-arachidonoylglycerol mediating inhibition of adenylate cyclase. May function in inflammatory response, nociceptive transmission and bone homeostasis. In Homo sapiens (Human), this protein is Cannabinoid receptor 2 (CNR2).